The sequence spans 252 residues: Probable 6-phosphogluconolactonase 5 (252 aa).

This sequence belongs to the glucosamine/galactosamine-6-phosphate isomerase family. 6-phosphogluconolactonase subfamily.

It localises to the cytoplasm. The protein resides in the cytosol. It catalyses the reaction 6-phospho-D-glucono-1,5-lactone + H2O = 6-phospho-D-gluconate + H(+). It participates in carbohydrate degradation; pentose phosphate pathway; D-ribulose 5-phosphate from D-glucose 6-phosphate (oxidative stage): step 2/3. Catalyzes the hydrolysis of 6-phosphogluconolactone to 6-phosphogluconate. In Arabidopsis thaliana (Mouse-ear cress), this protein is Probable 6-phosphogluconolactonase 5.